Reading from the N-terminus, the 97-residue chain is Large ribosomal subunit protein bL28 (97 aa).

Belongs to the bacterial ribosomal protein bL28 family.

In Rickettsia rickettsii (strain Iowa), this protein is Large ribosomal subunit protein bL28.